Reading from the N-terminus, the 286-residue chain is ATP synthase gamma chain (286 aa).

This sequence belongs to the ATPase gamma chain family. As to quaternary structure, F-type ATPases have 2 components, CF(1) - the catalytic core - and CF(0) - the membrane proton channel. CF(1) has five subunits: alpha(3), beta(3), gamma(1), delta(1), epsilon(1). CF(0) has three main subunits: a, b and c.

Its subcellular location is the cell inner membrane. In terms of biological role, produces ATP from ADP in the presence of a proton gradient across the membrane. The gamma chain is believed to be important in regulating ATPase activity and the flow of protons through the CF(0) complex. This Marinomonas sp. (strain MWYL1) protein is ATP synthase gamma chain.